A 366-amino-acid polypeptide reads, in one-letter code: GTP cyclohydrolase 1 type 2 homolog (366 aa).

His-64, His-65, Asp-102, His-326, and Glu-329 together coordinate a divalent metal cation.

This sequence belongs to the GTP cyclohydrolase I type 2/NIF3 family. In terms of assembly, homohexamer.

The sequence is that of GTP cyclohydrolase 1 type 2 homolog from Staphylococcus epidermidis (strain ATCC 35984 / DSM 28319 / BCRC 17069 / CCUG 31568 / BM 3577 / RP62A).